Here is a 622-residue protein sequence, read N- to C-terminus: Apical membrane antigen 1 (622 aa).

A signal peptide spans M1–G24. Topologically, residues Q25–K546 are extracellular. Disulfide bonds link C149-C302, C217-C247, C263-C275, C320-C418, and C337-C409. N-linked (GlcNAc...) asparagine glycans are attached at residues N286, N371, N421, N422, and N499. 3 cysteine pairs are disulfide-bonded: C443/C502, C490/C507, and C492/C509. The helical transmembrane segment at I547–Y567 threads the bilayer. Over K568–Y622 the chain is Cytoplasmic. The segment at D577–K607 is disordered.

It belongs to the apicomplexan parasites AMA1 family.

It localises to the membrane. In terms of biological role, involved in parasite invasion of erythrocytes. The polypeptide is Apical membrane antigen 1 (AMA-1) (Plasmodium falciparum (isolate thtn / Thailand)).